The sequence spans 279 residues: Fatty acid metabolism regulator protein (279 aa).

Residues 6 to 74 enclose the HTH gntR-type domain; it reads KSPAGFAEKY…HGKPTKVNQF (69 aa). The H-T-H motif DNA-binding region spans 34–53; it reads ERELSELIGVTRTTLREVLQ.

In terms of assembly, homodimer.

Its subcellular location is the cytoplasm. In terms of biological role, multifunctional regulator of fatty acid metabolism. In Vibrio parahaemolyticus serotype O3:K6 (strain RIMD 2210633), this protein is Fatty acid metabolism regulator protein.